Consider the following 501-residue polypeptide: Myosin heavy chain, embryonic smooth muscle isoform (501 aa).

Residues 1-457 are a coiled coil; the sequence is REAREKETKA…TLKNRLRRGG (457 aa). The tract at residues 1-501 is rodlike tail (S2 and LMM domains); it reads REAREKETKA…VNETQPPQSE (501 aa). 3 disordered regions span residues 182 to 202, 221 to 254, and 397 to 501; these read YQRELEEARGSRDEIFAQSKE, LASSERARRHAEQERDELADEIANSASGKSALLD, and MEKA…PQSE. Residues 223 to 233 show a composition bias toward basic and acidic residues; sequence SSERARRHAEQ. Positions 492–501 are enriched in polar residues; sequence VNETQPPQSE.

In terms of assembly, muscle myosin is a hexameric protein that consists of 2 heavy chain subunits (MHC), 2 alkali light chain subunits (MLC) and 2 regulatory light chain subunits (MLC-2).

It is found in the cytoplasm. Its subcellular location is the myofibril. Muscle contraction. The sequence is that of Myosin heavy chain, embryonic smooth muscle isoform from Oryctolagus cuniculus (Rabbit).